The sequence spans 216 residues: Urease operon 23 kDa accessory protein (216 aa).

Involved in the expression of hydrogenase activity. May be a regulatory gene affecting the expression of the hydrogenase operon or could be involved in the process of nickel incorporation into the hydrogenase apoenzyme. In Rhizobium meliloti (strain 1021) (Ensifer meliloti), this protein is Urease operon 23 kDa accessory protein.